A 158-amino-acid chain; its full sequence is NAD(P)H-quinone oxidoreductase subunit N (158 aa).

It belongs to the complex I NdhN subunit family. As to quaternary structure, NDH-1 can be composed of about 15 different subunits; different subcomplexes with different compositions have been identified which probably have different functions.

The protein localises to the cellular thylakoid membrane. The catalysed reaction is a plastoquinone + NADH + (n+1) H(+)(in) = a plastoquinol + NAD(+) + n H(+)(out). It carries out the reaction a plastoquinone + NADPH + (n+1) H(+)(in) = a plastoquinol + NADP(+) + n H(+)(out). Functionally, NDH-1 shuttles electrons from an unknown electron donor, via FMN and iron-sulfur (Fe-S) centers, to quinones in the respiratory and/or the photosynthetic chain. The immediate electron acceptor for the enzyme in this species is believed to be plastoquinone. Couples the redox reaction to proton translocation, and thus conserves the redox energy in a proton gradient. Cyanobacterial NDH-1 also plays a role in inorganic carbon-concentration. This is NAD(P)H-quinone oxidoreductase subunit N from Prochlorococcus marinus (strain MIT 9301).